Reading from the N-terminus, the 741-residue chain is Pentatricopeptide repeat-containing protein At3g58590 (741 aa).

PPR repeat units lie at residues 48–78, 79–113, 114–146, 148–178, 179–213, 214–248, 249–279, 280–314, 315–349, 350–380, 381–414, 415–445, 446–481, 483–508, 509–543, 544–578, 580–610, 611–645, 646–680, and 681–715; these read PVYVCNNIISLYEKLGEVSLAGKVFDQMPER, NKVSFNTIIKGYSKYGDVDKAWGVFSEMRYFGYLP, NQSTVSGLLSCASLDVRAGTQLHGLSLKYGLFM, DAFVGTCLLCLYGRLDLLEMAEQVFEDMPFK, SLETWNHMMSLLGHRGFLKECMFFFRELVRMGASL, TESSFLGVLKGVSCVKDLDISKQLHCSATKKGLDC, EISVVNSLISAYGKCGNTHMAERMFQDAGSW, DIVSWNAIICATAKSENPLKALKLFVSMPEHGFSP, NQGTYVSVLGVSSLVQLLSCGRQIHGMLIKNGCET, GIVLGNALIDFYAKCGNLEDSRLCFDYIRDK, NIVCWNALLSGYANKDGPICLSLFLQMLQMGFRP, TEYTFSTALKSCCVTELQQLHSVIVRMGYED, NDYVLSSLMRSYAKNQLMNDALLLLDWASGPTSVVP, NIVAGIYSRRGQYHESVKLISTLEQP, DTVSWNIAIAACSRSDYHEEVIELFKHMLQSNIRP, DKYTFVSILSLCSKLCDLTLGSSIHGLITKTDFSC, DTFVCNVLIDMYGKCGSIRSVMKVFEETREK, NLITWTALISCLGIHGYGQEALEKFKETLSLGFKP, DRVSFISILTACRHGGMVKEGMGLFQKMKDYGVEP, and EMDHYRCAVDLLARNGYLKEAEHLIREMPFPADAP.

Belongs to the PPR family. P subfamily.

This chain is Pentatricopeptide repeat-containing protein At3g58590, found in Arabidopsis thaliana (Mouse-ear cress).